The primary structure comprises 250 residues: Silencing boundary-establishment protein FUB1 (250 aa).

Residues 179-250 (PDWSGGLPNP…GFGGSGSGFI (72 aa)) form a disordered region. Over residues 202-213 (PNRRPAPRREDM) the composition is skewed to basic and acidic residues. A compositionally biased stretch (gly residues) spans 229-250 (PGSGGFGGSGSGGFGGSGSGFI).

It belongs to the proteasome inhibitor PI31 family. Interacts with the 20S proteasome.

Plays a role in the establishment of transcriptional silencing boundaries, preventing the propagation of heterochromatic silencing. This Saccharomyces cerevisiae (strain ATCC 204508 / S288c) (Baker's yeast) protein is Silencing boundary-establishment protein FUB1.